The primary structure comprises 491 residues: Glutamyl-tRNA(Gln) amidotransferase subunit A (491 aa).

Active-site charge relay system residues include Lys-76 and Ser-154. The active-site Acyl-ester intermediate is the Ser-178.

This sequence belongs to the amidase family. GatA subfamily. Heterotrimer of A, B and C subunits.

The enzyme catalyses L-glutamyl-tRNA(Gln) + L-glutamine + ATP + H2O = L-glutaminyl-tRNA(Gln) + L-glutamate + ADP + phosphate + H(+). In terms of biological role, allows the formation of correctly charged Gln-tRNA(Gln) through the transamidation of misacylated Glu-tRNA(Gln) in organisms which lack glutaminyl-tRNA synthetase. The reaction takes place in the presence of glutamine and ATP through an activated gamma-phospho-Glu-tRNA(Gln). This Cereibacter sphaeroides (strain ATCC 17023 / DSM 158 / JCM 6121 / CCUG 31486 / LMG 2827 / NBRC 12203 / NCIMB 8253 / ATH 2.4.1.) (Rhodobacter sphaeroides) protein is Glutamyl-tRNA(Gln) amidotransferase subunit A.